Consider the following 674-residue polypeptide: Penicillin-binding protein activator LpoA (674 aa).

A signal peptide spans methionine 1–glycine 31. The N-palmitoyl cysteine moiety is linked to residue cysteine 32. Cysteine 32 is lipidated: S-diacylglycerol cysteine. Positions glycine 291–proline 349 are disordered. The span at valine 292–serine 315 shows a compositional bias: low complexity. Over residues threonine 316–alanine 328 the composition is skewed to polar residues. Residues alanine 331–proline 349 show a composition bias toward low complexity.

This sequence belongs to the LpoA family. As to quaternary structure, interacts with PBP1a.

The protein resides in the cell outer membrane. Functionally, regulator of peptidoglycan synthesis that is essential for the function of penicillin-binding protein 1A (PBP1a). This chain is Penicillin-binding protein activator LpoA, found in Serratia proteamaculans (strain 568).